A 423-amino-acid chain; its full sequence is Histidine--tRNA ligase (423 aa).

This sequence belongs to the class-II aminoacyl-tRNA synthetase family. Homodimer.

It localises to the cytoplasm. It carries out the reaction tRNA(His) + L-histidine + ATP = L-histidyl-tRNA(His) + AMP + diphosphate + H(+). In Anoxybacillus flavithermus (strain DSM 21510 / WK1), this protein is Histidine--tRNA ligase.